We begin with the raw amino-acid sequence, 298 residues long: Glycine--tRNA ligase alpha subunit (298 aa).

The protein belongs to the class-II aminoacyl-tRNA synthetase family. Tetramer of two alpha and two beta subunits.

It is found in the cytoplasm. It catalyses the reaction tRNA(Gly) + glycine + ATP = glycyl-tRNA(Gly) + AMP + diphosphate. In Lacticaseibacillus paracasei (strain ATCC 334 / BCRC 17002 / CCUG 31169 / CIP 107868 / KCTC 3260 / NRRL B-441) (Lactobacillus paracasei), this protein is Glycine--tRNA ligase alpha subunit.